The chain runs to 485 residues: N-succinylglutamate 5-semialdehyde dehydrogenase (485 aa).

220 to 225 (GSANTG) is a binding site for NAD(+). Active-site residues include E243 and C278.

It belongs to the aldehyde dehydrogenase family. AstD subfamily.

It catalyses the reaction N-succinyl-L-glutamate 5-semialdehyde + NAD(+) + H2O = N-succinyl-L-glutamate + NADH + 2 H(+). The protein operates within amino-acid degradation; L-arginine degradation via AST pathway; L-glutamate and succinate from L-arginine: step 4/5. Its function is as follows. Catalyzes the NAD-dependent reduction of succinylglutamate semialdehyde into succinylglutamate. The chain is N-succinylglutamate 5-semialdehyde dehydrogenase from Vibrio atlanticus (strain LGP32) (Vibrio splendidus (strain Mel32)).